The chain runs to 469 residues: Uronate isomerase (469 aa).

Belongs to the metallo-dependent hydrolases superfamily. Uronate isomerase family.

The enzyme catalyses D-glucuronate = D-fructuronate. The catalysed reaction is aldehydo-D-galacturonate = keto-D-tagaturonate. Its pathway is carbohydrate metabolism; pentose and glucuronate interconversion. In Yersinia enterocolitica serotype O:8 / biotype 1B (strain NCTC 13174 / 8081), this protein is Uronate isomerase.